Here is a 438-residue protein sequence, read N- to C-terminus: MRNMVSEISDLSLAKEKSEAQFIARNPKSNDFHCKACDSLPGGNTRTVLHGAPFPIFIEAGYGSKLRDVDGHEYTDFLNELTAGIYGHSNPVIKKALMQGFDEIGISLGGTTTCELNYAEALKSRFLSIEKIRFCNSGTEANITAIIAARKFTGKRAVIAMHGGYHGGPLSFAHGISPYNMDSQDFILCEYNNSTQFKELVNSSQDIAAVIVEAMQGAGGAIPADKEFMQTIQLECEKNDIVFILDEVMTSRLSPGGLQQIYCLKPDLTTLGKYLGGGLPFGAFGGRADIMSCFDPRLPGSLSHSGTFNNDTLTLTAGYVGLTELYTPEAVKRLNALGDGLRKDIESYCHNTKMSITGLGSIMNIHFTESGRVNSYNDTAGEVIELKDLLWMDLLKEGFWIARRGMITLSLVLTESELEAFKLTIKAWIHRRMSLIRI.

Lys-273 carries the N6-(pyridoxal phosphate)lysine modification.

It belongs to the class-III pyridoxal-phosphate-dependent aminotransferase family. The cofactor is pyridoxal 5'-phosphate.

It is found in the mitochondrion. This is an uncharacterized protein from Schizosaccharomyces pombe (strain 972 / ATCC 24843) (Fission yeast).